A 485-amino-acid polypeptide reads, in one-letter code: Cobyric acid synthase (485 aa).

Residues 248–435 (VLKVVVPVLP…LHGLFESPDA (188 aa)) enclose the GATase cobBQ-type domain. C329 acts as the Nucleophile in catalysis. H427 is an active-site residue.

The protein belongs to the CobB/CobQ family. CobQ subfamily.

The protein operates within cofactor biosynthesis; adenosylcobalamin biosynthesis. Its function is as follows. Catalyzes amidations at positions B, D, E, and G on adenosylcobyrinic A,C-diamide. NH(2) groups are provided by glutamine, and one molecule of ATP is hydrogenolyzed for each amidation. The sequence is that of Cobyric acid synthase from Stutzerimonas stutzeri (strain A1501) (Pseudomonas stutzeri).